A 103-amino-acid chain; its full sequence is Large ribosomal subunit protein uL24 (103 aa).

Belongs to the universal ribosomal protein uL24 family. In terms of assembly, part of the 50S ribosomal subunit.

One of two assembly initiator proteins, it binds directly to the 5'-end of the 23S rRNA, where it nucleates assembly of the 50S subunit. In terms of biological role, one of the proteins that surrounds the polypeptide exit tunnel on the outside of the subunit. The protein is Large ribosomal subunit protein uL24 of Histophilus somni (strain 129Pt) (Haemophilus somnus).